The chain runs to 590 residues: Aspartate--tRNA(Asp/Asn) ligase (590 aa).

L-aspartate is bound at residue E175. The interval 199 to 202 is aspartate; sequence QQYK. L-aspartate contacts are provided by R221 and H450. 221–223 contributes to the ATP binding site; the sequence is RDE. E484 contributes to the ATP binding site. L-aspartate is bound at residue R491. 536-539 is an ATP binding site; that stretch reads GVDR.

This sequence belongs to the class-II aminoacyl-tRNA synthetase family. Type 1 subfamily. As to quaternary structure, homodimer.

The protein resides in the cytoplasm. It catalyses the reaction tRNA(Asx) + L-aspartate + ATP = L-aspartyl-tRNA(Asx) + AMP + diphosphate. Functionally, aspartyl-tRNA synthetase with relaxed tRNA specificity since it is able to aspartylate not only its cognate tRNA(Asp) but also tRNA(Asn). Reaction proceeds in two steps: L-aspartate is first activated by ATP to form Asp-AMP and then transferred to the acceptor end of tRNA(Asp/Asn). The polypeptide is Aspartate--tRNA(Asp/Asn) ligase (Rhodopseudomonas palustris (strain BisB18)).